The chain runs to 165 residues: Sorting nexin-12 (165 aa).

The segment at 1–20 (MSDTAVADTRRLNSKPQDLT) is disordered. An N-acetylserine modification is found at serine 2. The residue at position 23 (tyrosine 23) is a Phosphotyrosine. Residues 28 to 151 (NFLEIDIFNP…HMFLQEEAID (124 aa)) form the PX domain. Residues arginine 71, serine 73, lysine 96, and arginine 118 each coordinate a 1,2-diacyl-sn-glycero-3-phospho-(1D-myo-inositol-3-phosphate). Serine 73 is subject to Phosphoserine.

Belongs to the sorting nexin family.

It is found in the membrane. Its function is as follows. May be involved in several stages of intracellular trafficking. This chain is Sorting nexin-12 (Snx12), found in Mus musculus (Mouse).